The primary structure comprises 172 residues: Envelope protein UL45 (172 aa).

The Intravirion portion of the chain corresponds to 1–27 (MPLRASEHAYRPLGPGTPPMRARLPAA). A helical; Signal-anchor for type II membrane protein transmembrane segment spans residues 28–48 (AWVGVGTIIGGVVIIAALVLV). Topologically, residues 49–172 (PSRASWALSP…TSTRNALGLP (124 aa)) are virion surface.

The protein belongs to the herpesviridae HHV-1 UL45 family.

The protein localises to the virion membrane. Its function is as follows. Important virulence factor of HSV neurotropism. Seems to be required for glycoprotein B-induced fusion. Dispensable for growth in vitro. The protein is Envelope protein UL45 of Human herpesvirus 1 (strain 17) (HHV-1).